Consider the following 312-residue polypeptide: Taste receptor type 2 member 103 (312 aa).

The Extracellular portion of the chain corresponds to 1 to 6; the sequence is MVLTIR. A helical transmembrane segment spans residues 7 to 27; it reads AILWVTLITIISLEFIIGILG. Residues 28–61 are Cytoplasmic-facing; that stretch reads NVFIALVNIIDWVKRGKISAVDKTYMALAISRTA. The helical transmembrane segment at 62 to 82 threads the bilayer; that stretch reads FLLSLITGFLVSLLDPALLGM. Residues 83-92 are Extracellular-facing; the sequence is RTMVRLLTIS. A helical transmembrane segment spans residues 93–113; that stretch reads WMVTNHFSVWFATCLSIFYFL. Residues 114-132 lie on the Cytoplasmic side of the membrane; the sequence is KIANFSNSIFLVLKWEAKK. The helical transmembrane segment at 133 to 153 threads the bilayer; it reads VVSVTLVVSVIILIMNIIVIN. Over 154–185 the chain is Extracellular; that stretch reads KFTDRLQVNTLQNCSTSNTLKDYGLFLFISTG. A glycan (N-linked (GlcNAc...) asparagine) is linked at Asn166. The helical transmembrane segment at 186–206 threads the bilayer; the sequence is FTLTPFAVSLTMFLLLIFSLW. Over 207–229 the chain is Cytoplasmic; the sequence is RHLKNMCHSATGSRDVSTVAHIK. The helical transmembrane segment at 230-250 threads the bilayer; that stretch reads GLQTVVTFLLLYTAFVMSLLS. Over 251–264 the chain is Extracellular; that stretch reads ESLNINIQHTNLLS. Residues 265 to 285 traverse the membrane as a helical segment; that stretch reads HFLRSIGVAFPTGHSCVLILG. The Cytoplasmic portion of the chain corresponds to 286–312; sequence NSKLRQASLSVILWLRYKYKHIENWGP.

It belongs to the G-protein coupled receptor T2R family. As to expression, expressed in subsets of taste receptor cells of the tongue and palate epithelium and exclusively in gustducin-positive cells. Expressed in 15% taste bud cells in circumvallate and foliate papillae but only in 2% in fungiform papillae.

It localises to the membrane. In terms of biological role, gustducin-coupled receptor implicated in the perception of bitter compounds in the oral cavity and the gastrointestinal tract. Signals through PLCB2 and the calcium-regulated cation channel TRPM5. This is Taste receptor type 2 member 103 (Tas2r103) from Mus musculus (Mouse).